Consider the following 201-residue polypeptide: Glycerol-3-phosphate acyltransferase (201 aa).

Helical transmembrane passes span 5–25 (LLGA…FGVV), 55–75 (KMGV…ILLA), 88–108 (WSTA…WLGF), 118–138 (LGIF…GYAV), and 164–184 (TYGV…LIFL).

This sequence belongs to the PlsY family. As to quaternary structure, probably interacts with PlsX.

The protein resides in the cell inner membrane. It carries out the reaction an acyl phosphate + sn-glycerol 3-phosphate = a 1-acyl-sn-glycero-3-phosphate + phosphate. It participates in lipid metabolism; phospholipid metabolism. Catalyzes the transfer of an acyl group from acyl-phosphate (acyl-PO(4)) to glycerol-3-phosphate (G3P) to form lysophosphatidic acid (LPA). This enzyme utilizes acyl-phosphate as fatty acyl donor, but not acyl-CoA or acyl-ACP. This is Glycerol-3-phosphate acyltransferase from Anaeromyxobacter dehalogenans (strain 2CP-C).